Reading from the N-terminus, the 325-residue chain is All-trans-nonaprenyl-diphosphate synthase (geranyl-diphosphate specific) (325 aa).

3 residues coordinate isopentenyl diphosphate: Lys48, Arg51, and His81. Residues Asp88 and Asp92 each coordinate Mg(2+). Arg97 serves as a coordination point for an all-trans-polyprenyl diphosphate. Isopentenyl diphosphate is bound at residue Arg98. Lys174, Thr175, Gln211, and Lys228 together coordinate an all-trans-polyprenyl diphosphate.

This sequence belongs to the FPP/GGPP synthase family. In terms of assembly, homodimer. It depends on Mg(2+) as a cofactor.

It catalyses the reaction 7 isopentenyl diphosphate + (2E)-geranyl diphosphate = all-trans-nonaprenyl diphosphate + 7 diphosphate. Catalyzes the sequential condensation of isopentenyl diphosphate (IPP) with the allylic substrate to give solanesyl diphosphate. Could be important to determine the side chain length of ubiquinone. The chain is All-trans-nonaprenyl-diphosphate synthase (geranyl-diphosphate specific) (sdsA) from Rhodobacter capsulatus (Rhodopseudomonas capsulata).